We begin with the raw amino-acid sequence, 1383 residues long: DNA-directed RNA polymerase subunit beta (1383 aa).

It belongs to the RNA polymerase beta chain family. As to quaternary structure, the RNAP catalytic core consists of 2 alpha, 1 beta, 1 beta' and 1 omega subunit. When a sigma factor is associated with the core the holoenzyme is formed, which can initiate transcription.

The catalysed reaction is RNA(n) + a ribonucleoside 5'-triphosphate = RNA(n+1) + diphosphate. In terms of biological role, DNA-dependent RNA polymerase catalyzes the transcription of DNA into RNA using the four ribonucleoside triphosphates as substrates. The sequence is that of DNA-directed RNA polymerase subunit beta from Bartonella quintana (strain Toulouse) (Rochalimaea quintana).